Here is a 246-residue protein sequence, read N- to C-terminus: E3 ubiquitin-protein ligase MARCHF2 (246 aa).

The segment at 56–116 (GTQSDGPICR…ELCHTEFAVE (61 aa)) adopts an RING-CH-type zinc-finger fold. Residues Cys64, Cys67, Cys80, Cys82, His90, Cys93, Cys106, and Cys109 each contribute to the Zn(2+) site. Transmembrane regions (helical) follow at residues 138-158 (LFCD…SGWL) and 175-195 (AVGL…WTLV).

Its subcellular location is the endoplasmic reticulum membrane. It localises to the lysosome membrane. The protein localises to the endosome membrane. It carries out the reaction S-ubiquitinyl-[E2 ubiquitin-conjugating enzyme]-L-cysteine + [acceptor protein]-L-lysine = [E2 ubiquitin-conjugating enzyme]-L-cysteine + N(6)-ubiquitinyl-[acceptor protein]-L-lysine.. It functions in the pathway protein modification; protein ubiquitination. Functionally, E3 ubiquitin-protein ligase which may be involved in endosomal trafficking. E3 ubiquitin ligases accept ubiquitin from an E2 ubiquitin-conjugating enzyme in the form of a thioester and then directly transfer the ubiquitin to targeted substrates. This Xenopus tropicalis (Western clawed frog) protein is E3 ubiquitin-protein ligase MARCHF2 (marchf2).